A 510-amino-acid polypeptide reads, in one-letter code: Probable lipid II flippase MurJ (510 aa).

Helical transmembrane passes span 13-33 (DVVIAHLIGAGAAADVFLFAN), 81-101 (GLVSIVTILAMVGSPHVAALF), 130-150 (FPYLWFVTFVAFSGAVLNTIG), 154-174 (VMSFSPVLLNIAMIATALFLA), 182-202 (LALAIGIFLGGLLQFLFQIPF), 240-260 (INLLLDTVIASFLMTGSISWL), 266-286 (LLEFPLGLFGIAISTVILPTL), 315-335 (IFLLGVPAAIGIAVLAQPMLL), 357-377 (AFNAGLLSFMLIKILANGYYA), 396-416 (MGFNLLAIPFSYVGLAIASAM), 443-463 (VFFVKVLLAAIAMGAAVWYYV), and 481-501 (LVWLIVLAAIVYGATLILLGV).

This sequence belongs to the MurJ/MviN family.

It localises to the cell inner membrane. The protein operates within cell wall biogenesis; peptidoglycan biosynthesis. Functionally, involved in peptidoglycan biosynthesis. Transports lipid-linked peptidoglycan precursors from the inner to the outer leaflet of the cytoplasmic membrane. This is Probable lipid II flippase MurJ from Haemophilus influenzae (strain ATCC 51907 / DSM 11121 / KW20 / Rd).